The chain runs to 528 residues: MYSFIECIAGALFVLGCVVVTLVVIGVRALLYNFRNRPAPPLSSQLGQNAPHVTIIRPVKGLEPRLYDCIAASFRQDYPQDKVSIRLCLEDDTDPAYPVLQKVIEDFPTIDARIMLEKEDHVLSETVNMGPNPKIRNLSRAYREAKGDIVWIIDCNIWMAKGVLGRMVDKLMGYRVGGAAKPYKFVHQLPIVVDLMDFSTSLAAEGRSLLDASPEEDHPTEDLGAEEFPKVMSHGGGRIDEMFMTTSHAKFYSAINTLRAAPCAVGKSNMFRKSQLDQATDAILNPKLDQSKNLPTGVDYFSHNICEDHLIGEALWTTDFPGYKSHGLVWGDIAVQPVSGMSVQAYTARRSRWLRARKYTVLSATILEPFTECFLFATYMSLAMTTIPVLSQNLGIPKTWNATAIAWFTITTLWMLIDYIGYLRLHSGVTMEVDEHTPYFAKGFKNTGGIKRRPFLEFLAAWIGREGLAFPVWAYAVVFGNTVNWRGRLFYIHWDTTVDAVEPREERTREVRTPELERGPSRNKHRVD.

At 1–6 (MYSFIE) the chain is on the lumenal side. The chain crosses the membrane as a helical span at residues 7–27 (CIAGALFVLGCVVVTLVVIGV). Residues 28–369 (RALLYNFRNR…TVLSATILEP (342 aa)) are Cytoplasmic-facing. Position 94 (aspartate 94) is a short sequence motif, D1. A short sequence motif (D2) is located at residue aspartate 154. Position 308 (aspartate 308) is a short sequence motif, D3. The active-site Proton acceptor is the aspartate 308. Positions 349-353 (RRSRW) match the (Q/R)XXRW motif. Residues 370 to 390 (FTECFLFATYMSLAMTTIPVL) form a helical membrane-spanning segment. The Lumenal portion of the chain corresponds to 391–402 (SQNLGIPKTWNA). Residues 403–423 (TAIAWFTITTLWMLIDYIGYL) traverse the membrane as a helical segment. Residues 424-457 (RLHSGVTMEVDEHTPYFAKGFKNTGGIKRRPFLE) are Cytoplasmic-facing. The helical transmembrane segment at 458–478 (FLAAWIGREGLAFPVWAYAVV) threads the bilayer. Over 479–528 (FGNTVNWRGRLFYIHWDTTVDAVEPREERTREVRTPELERGPSRNKHRVD) the chain is Lumenal. The disordered stretch occupies residues 503 to 528 (PREERTREVRTPELERGPSRNKHRVD).

This sequence belongs to the glycosyltransferase 2 family.

The protein localises to the golgi apparatus membrane. The catalysed reaction is an N-acylsphing-4-enine + UDP-alpha-D-glucose = a beta-D-glucosyl-(1&lt;-&gt;1')-N-acylsphing-4-enine + UDP + H(+). Its pathway is lipid metabolism; sphingolipid metabolism. In terms of biological role, catalyzes the final step in the biosynthesis of the membrane lipid glucosylceramide (GluCer), the transfer of glucose to ceramide. Glucosylceramides play important roles in growth, differentiation and pathogenicity. Contribution to fungal pathogenesis is host-dependent. This chain is Ceramide glucosyltransferase, found in Gibberella zeae (strain ATCC MYA-4620 / CBS 123657 / FGSC 9075 / NRRL 31084 / PH-1) (Wheat head blight fungus).